A 427-amino-acid polypeptide reads, in one-letter code: Transcription factor MYB98 (427 aa).

The short motif at 195–202 (TRKLSSSS) is the Nuclear localization signal 1 element. HTH myb-type domains follow at residues 212-267 (KSTL…RPDI) and 268-318 (KKET…RRQF). 2 consecutive DNA-binding regions (H-T-H motif) follow at residues 240–263 (WSHIAQVLPGRIGKQCRERWHNHL) and 291–314 (WAEIAKRLPGRTENSIKNHWNATK). The Nuclear localization signal 2 signature appears at 361-368 (NKKKDVVV).

In terms of tissue distribution, expressed at high levels in the synergid cells of the female gametophyte, and at lower levels in the endosperm of young seeds and the trichomes of young leaves and sepals.

The protein resides in the nucleus. Its function is as follows. Transcription factor that binds to the motif 5'-GTAACNT-3' in the promoter of target genes (e.g. DD11 and DD18) and promotes their expression within synergid cells (e.g. in the filiform apparatus) in ovules. Required for the formation of the filiform apparatus during synergid cell differentiation in the female gametophyte. Involved in pollen tube guidance to the micropyle. The sequence is that of Transcription factor MYB98 from Arabidopsis thaliana (Mouse-ear cress).